The chain runs to 985 residues: Cation channel sperm-associated auxiliary subunit epsilon (985 aa).

The N-terminal stretch at 1-35 is a signal peptide; the sequence is MPSAGQRKPGSLLALQALQKWLLRGGVGAMLARQV. The Extracellular portion of the chain corresponds to 36-937; the sequence is VAALLLWLSC…ESLGMIPRSS (902 aa). 4 cysteine pairs are disulfide-bonded: Cys-87-Cys-101, Cys-130-Cys-235, Cys-275-Cys-365, and Cys-439-Cys-442. N-linked (GlcNAc...) asparagine glycosylation is found at Asn-91, Asn-143, and Asn-292. N-linked (GlcNAc...) asparagine glycans are attached at residues Asn-502, Asn-517, and Asn-565. Cystine bridges form between Cys-617–Cys-724, Cys-737–Cys-919, Cys-753–Cys-786, and Cys-838–Cys-869. N-linked (GlcNAc...) asparagine glycosylation is present at Asn-749. Asn-830 carries an N-linked (GlcNAc...) asparagine glycan. N-linked (GlcNAc...) asparagine glycans are attached at residues Asn-888, Asn-915, and Asn-920. A helical transmembrane segment spans residues 938–958; the sequence is VYLVAALIFVLMLTFISILVL. The Cytoplasmic portion of the chain corresponds to 959-985; that stretch reads SYFWYLKIYRQFIIEPLHKRPAKQKKN.

Belongs to the CATSPERD family. As to quaternary structure, component of the CatSper complex or CatSpermasome composed of the core pore-forming members CATSPER1, CATSPER2, CATSPER3 and CATSPER4 as well as auxiliary members CATSPERB, CATSPERG2, CATSPERD, CATSPERE, CATSPERZ, C2CD6/CATSPERT, SLCO6C1, TMEM249, TMEM262 and EFCAB9. HSPA1 may be an additional auxiliary complex member. The core complex members CATSPER1, CATSPER2, CATSPER3 and CATSPER4 form a heterotetrameric channel. The auxiliary CATSPERB, CATSPERG2, CATSPERD and CATSPERE subunits form a pavilion-like structure over the pore which stabilizes the complex through interactions with CATSPER4, CATSPER3, CATSPER1 and CATSPER2 respectively. SLCO6C1 interacts with CATSPERE and TMEM262/CATSPERH interacts with CATSPERB, further stabilizing the complex. C2CD6/CATSPERT interacts at least with CATSPERD and is required for targeting the CatSper complex in the flagellar membrane. In terms of tissue distribution, testis-specific.

Its subcellular location is the cell projection. The protein resides in the cilium. It is found in the flagellum membrane. Its function is as follows. Auxiliary component of the CatSper complex, a complex involved in sperm cell hyperactivation. Sperm cell hyperactivation is needed for sperm motility which is essential late in the preparation of sperm for fertilization. This is Cation channel sperm-associated auxiliary subunit epsilon from Mus musculus (Mouse).